The chain runs to 138 residues: ATP synthase epsilon chain 2 (138 aa).

The protein belongs to the ATPase epsilon chain family. In terms of assembly, F-type ATPases have 2 components, CF(1) - the catalytic core - and CF(0) - the membrane proton channel. CF(1) has five subunits: alpha(3), beta(3), gamma(1), delta(1), epsilon(1). CF(0) has three main subunits: a, b and c.

The protein resides in the cell inner membrane. Its function is as follows. Produces ATP from ADP in the presence of a proton gradient across the membrane. The polypeptide is ATP synthase epsilon chain 2 (Syntrophotalea carbinolica (strain DSM 2380 / NBRC 103641 / GraBd1) (Pelobacter carbinolicus)).